The following is a 207-amino-acid chain: 8-oxoguanine DNA glycosylase/AP lyase (207 aa).

Residues Lys-128 and Asp-146 contribute to the active site.

This sequence belongs to the type-2 OGG1 family.

The catalysed reaction is 2'-deoxyribonucleotide-(2'-deoxyribose 5'-phosphate)-2'-deoxyribonucleotide-DNA = a 3'-end 2'-deoxyribonucleotide-(2,3-dehydro-2,3-deoxyribose 5'-phosphate)-DNA + a 5'-end 5'-phospho-2'-deoxyribonucleoside-DNA + H(+). Its function is as follows. Catalyzes the excision of an oxidatively damaged form of guanine (7,8-dihydro-8-oxoguanine = 8-oxoG) from DNA. Also cleaves the DNA backbone at apurinic/apyrimidinic sites (AP sites). This is 8-oxoguanine DNA glycosylase/AP lyase from Saccharolobus solfataricus (strain ATCC 35092 / DSM 1617 / JCM 11322 / P2) (Sulfolobus solfataricus).